The following is an 803-amino-acid chain: Leucine--tRNA ligase (803 aa).

The short motif at 40-51 (PYPSGAGLHVGH) is the 'HIGH' region element. The 'KMSKS' region signature appears at 575-579 (KMSKS). ATP is bound at residue K578.

The protein belongs to the class-I aminoacyl-tRNA synthetase family.

The protein resides in the cytoplasm. The catalysed reaction is tRNA(Leu) + L-leucine + ATP = L-leucyl-tRNA(Leu) + AMP + diphosphate. The sequence is that of Leucine--tRNA ligase from Listeria monocytogenes serotype 4b (strain F2365).